A 317-amino-acid chain; its full sequence is MSDTILRTSATAVPDTALLDQSLLGATAGDWLALLKPRVLYLVVYTGAAGLLVAPGGINPILGFTAILCIAMAAGAAGAINMWYDRDIDAVMRRTAGRPIPTGRISPDGALAYGVALSALSVLLMWLATNLLAAGLLAASIGFYVFIYTMWLKRRTPQNIVIGGAAGAFPPVIGWAAATGHVGLLPVLLFAIIFFWTPPHFWALSLFASADYQKAGVPMLPVVAGQKATRLAVMRYTLWLVPLSLLPYVLHLAGPVYGASAMVLGLAFVWYSWRVLRDRQDGNGVSLTRDAPAKAAFKFSILYLFLIFGALVLDHLV.

8 helical membrane-spanning segments follow: residues 39 to 59 (VLYL…GGIN), 60 to 80 (PILG…AGAI), 109 to 129 (GALA…WLAT), 131 to 151 (LLAA…YTMW), 160 to 180 (IVIG…AATG), 184 to 204 (LLPV…FWAL), 249 to 269 (VLHL…LAFV), and 297 to 317 (FKFS…DHLV).

This sequence belongs to the UbiA prenyltransferase family. Protoheme IX farnesyltransferase subfamily.

It is found in the cell inner membrane. It carries out the reaction heme b + (2E,6E)-farnesyl diphosphate + H2O = Fe(II)-heme o + diphosphate. It functions in the pathway porphyrin-containing compound metabolism; heme O biosynthesis; heme O from protoheme: step 1/1. Its function is as follows. Converts heme B (protoheme IX) to heme O by substitution of the vinyl group on carbon 2 of heme B porphyrin ring with a hydroxyethyl farnesyl side group. This is Protoheme IX farnesyltransferase from Acidiphilium cryptum (strain JF-5).